Reading from the N-terminus, the 69-residue chain is Putative antitoxin AF_1481 (69 aa).

It belongs to the UPF0330 family.

Possibly the antitoxin component of a type II toxin-antitoxin (TA) system. The protein is Putative antitoxin AF_1481 of Archaeoglobus fulgidus (strain ATCC 49558 / DSM 4304 / JCM 9628 / NBRC 100126 / VC-16).